A 428-amino-acid polypeptide reads, in one-letter code: MNPNQKIMTIGSICMVIGMISLVLQIGNMISIWASHSIQKMNQHQTEPCNQSIITYENNTWVNQTYVNISNTNFLTEKVVASIALSGNSSLCPISGWAVYSKDNGIRIGSKGDVFVIREPFISCSHLECRTFFLTQGSLLNDKHSNGTVKDRSPYRTLMSCPVGEAPSPYNSRFESVAWSASACHDGTSWLTIGISGPDNGAVAVLKYNGIITDTIKSWRNSILRTQESECACVNGSCFTVMTDGPSNGQASYKIFKIEKGKVVKSVELNAPNYHYEECSCYPDAGEITCVCRDNWHGSNRPWVSFDQNLEYQIGYICSGVFGDNPRPNDGTGSCDPVLPNGAYGVKGFSFKYGDGVWIGRTKSTNSRSGFEMIWDPNGWTGTDSNFSLKQDIVAMTDWSGYSGSFVQHPEMSGLDCIRPCLWVEPIR.

Residues 1 to 6 (MNPNQK) are Intravirion-facing. A helical membrane pass occupies residues 7 to 27 (IMTIGSICMVIGMISLVLQIG). The interval 11–33 (GSICMVIGMISLVLQIGNMISIW) is involved in apical transport and lipid raft association. The Virion surface segment spans residues 28–428 (NMISIWASHS…RPCLWVEPIR (401 aa)). The hypervariable stalk region stretch occupies residues 36 to 90 (HSIQKMNQHQTEPCNQSIITYENNTWVNQTYVNISNTNFLTEKVVASIALSGNSS). Asn-50, Asn-58, Asn-63, Asn-68, and Asn-88 each carry an N-linked (GlcNAc...) asparagine; by host glycan. Residues 91-428 (LCPISGWAVY…RPCLWVEPIR (338 aa)) form a head of neuraminidase region. 7 disulfide bridges follow: Cys-92–Cys-417, Cys-124–Cys-129, Cys-184–Cys-231, Cys-233–Cys-238, Cys-279–Cys-292, Cys-281–Cys-290, and Cys-318–Cys-335. Substrate is bound at residue Arg-118. Residue Asn-146 is glycosylated (N-linked (GlcNAc...) asparagine; by host). The Proton donor/acceptor role is filled by Asp-151. Residue Arg-152 coordinates substrate. Asn-235 is a glycosylation site (N-linked (GlcNAc...) asparagine; by host). 277 to 278 (EE) is a substrate binding site. Arg-293 is a binding site for substrate. Ca(2+) is bound by residues Asp-294, Gly-298, and Asp-324. Arg-368 contributes to the substrate binding site. Residue Asn-386 is glycosylated (N-linked (GlcNAc...) asparagine; by host). The Nucleophile role is filled by Tyr-402.

It belongs to the glycosyl hydrolase 34 family. As to quaternary structure, homotetramer. Requires Ca(2+) as cofactor. Post-translationally, N-glycosylated.

The protein resides in the virion membrane. The protein localises to the host apical cell membrane. It catalyses the reaction Hydrolysis of alpha-(2-&gt;3)-, alpha-(2-&gt;6)-, alpha-(2-&gt;8)- glycosidic linkages of terminal sialic acid residues in oligosaccharides, glycoproteins, glycolipids, colominic acid and synthetic substrates.. Its activity is regulated as follows. Inhibited by the neuraminidase inhibitors zanamivir (Relenza) and oseltamivir (Tamiflu). These drugs interfere with the release of progeny virus from infected cells and are effective against all influenza strains. Resistance to neuraminidase inhibitors is quite rare. Its function is as follows. Catalyzes the removal of terminal sialic acid residues from viral and cellular glycoconjugates. Cleaves off the terminal sialic acids on the glycosylated HA during virus budding to facilitate virus release. Additionally helps virus spread through the circulation by further removing sialic acids from the cell surface. These cleavages prevent self-aggregation and ensure the efficient spread of the progeny virus from cell to cell. Otherwise, infection would be limited to one round of replication. Described as a receptor-destroying enzyme because it cleaves a terminal sialic acid from the cellular receptors. May facilitate viral invasion of the upper airways by cleaving the sialic acid moieties on the mucin of the airway epithelial cells. Likely to plays a role in the budding process through its association with lipid rafts during intracellular transport. May additionally display a raft-association independent effect on budding. Plays a role in the determination of host range restriction on replication and virulence. Sialidase activity in late endosome/lysosome traffic seems to enhance virus replication. The chain is Neuraminidase from Aves (Cat).